We begin with the raw amino-acid sequence, 385 residues long: m7GpppN-mRNA hydrolase (385 aa).

Positions 95 to 226 constitute a Nudix hydrolase domain; sequence MGVPTYGAII…KLGLAPNKFF (132 aa). The Nudix box signature appears at 129-150; the sequence is GKVNKEEAPHDCAAREVFEETG. Mn(2+)-binding residues include Glu144 and Glu148. 5 positions are modified to phosphoserine: Ser246, Ser247, Ser249, Ser276, and Ser284. Residues 247-266 form a disordered region; the sequence is SDSDNGFSSTGSTPAKPTVE. Residues 249–259 are compositionally biased toward low complexity; that stretch reads SDNGFSSTGST.

It belongs to the Nudix hydrolase family. DCP2 subfamily. As to quaternary structure, found in a mRNA decay complex with LSM1, LSM3, LSM4, EXOSC2, EXOSC4, EXOSC10, PARN, XRN1, CNOT6, UPF1, UPF2 and UPF3B. Forms a complex with DCP1A, EDC3, DDX6 and EDC4/HEDLS, within this complex directly interacts with EDC4/HEDLS. Interacts with DPC1B, UPF1, UPF2 and UPF3B. Associates with polysomes. Interacts (via N-terminus and C-terminus) with TRIM21 (via N-terminus and C-terminus). Interacts with LIMD1, WTIP and AJUBA. Interacts with DDX17 in an RNA-dependent manner. Interacts with ZC3HAV1. Interacts with APOBEC3G in an RNA-dependent manner. Interacts with ZFP36L1 (via N-terminus). Interacts with NBDY. Requires Mn(2+) as cofactor. It depends on Mg(2+) as a cofactor.

It localises to the cytoplasm. Its subcellular location is the P-body. It is found in the nucleus. It carries out the reaction a 5'-end (N(7)-methyl 5'-triphosphoguanosine)-ribonucleoside in mRNA + H2O = N(7)-methyl-GDP + a 5'-end phospho-ribonucleoside in mRNA + 2 H(+). Its function is as follows. Decapping metalloenzyme that catalyzes the cleavage of the cap structure on mRNAs. Removes the 7-methyl guanine cap structure from mRNA molecules, yielding a 5'-phosphorylated mRNA fragment and 7m-GDP. Necessary for the degradation of mRNAs, both in normal mRNA turnover and in nonsense-mediated mRNA decay. Plays a role in replication-dependent histone mRNA degradation. Has higher activity towards mRNAs that lack a poly(A) tail. Has no activity towards a cap structure lacking an RNA moiety. The presence of a N(6)-methyladenosine methylation at the second transcribed position of mRNAs (N(6),2'-O-dimethyladenosine cap; m6A(m)) provides resistance to DCP2-mediated decapping. Blocks autophagy in nutrient-rich conditions by repressing the expression of ATG-related genes through degradation of their transcripts. This is m7GpppN-mRNA hydrolase (DCP2) from Pongo abelii (Sumatran orangutan).